Here is a 118-residue protein sequence, read N- to C-terminus: MLVNFVLVGFGAALGAMLRYGISVLVKSKWKTNFPFATFFINITGSFLLGFLVSSALGPVWQLFLGTGFMGGYTTFSTFKVESMELKWKTNYRVLFSYLGCTYVFGLIAAFLGLMLGV.

The next 4 membrane-spanning stretches (helical) occupy residues 5–25, 34–54, 56–76, and 98–118; these read FVLVGFGAALGAMLRYGISVL, FPFATFFINITGSFLLGFLVS, ALGPVWQLFLGTGFMGGYTTF, and YLGCTYVFGLIAAFLGLMLGV. Glycine 71 and threonine 74 together coordinate Na(+).

It belongs to the fluoride channel Fluc/FEX (TC 1.A.43) family.

The protein localises to the cell membrane. It catalyses the reaction fluoride(in) = fluoride(out). Its activity is regulated as follows. Na(+) is not transported, but it plays an essential structural role and its presence is essential for fluoride channel function. Its function is as follows. Fluoride-specific ion channel. Important for reducing fluoride concentration in the cell, thus reducing its toxicity. The protein is Fluoride-specific ion channel FluC 1 of Listeria monocytogenes serotype 4b (strain F2365).